The chain runs to 511 residues: Vesicular acetylcholine transporter (511 aa).

The Cytoplasmic portion of the chain corresponds to methionine 1–lysine 36. A helical transmembrane segment spans residues isoleucine 37–valine 57. Topologically, residues proline 58–glycine 108 are lumenal, vesicle. N-linked (GlcNAc...) asparagine glycosylation is found at asparagine 80, asparagine 83, and asparagine 88. Residues valine 109–isoleucine 129 traverse the membrane as a helical segment. Residues aspartate 130–aspartate 135 lie on the Cytoplasmic side of the membrane. The helical transmembrane segment at isoleucine 136–glutamate 156 threads the bilayer. Topologically, residues serine 157 to arginine 165 are lumenal, vesicle. The helical transmembrane segment at serine 166–lysine 186 threads the bilayer. Residues tyrosine 187–leucine 197 are Cytoplasmic-facing. Residues glycine 198 to leucine 218 traverse the membrane as a helical segment. The Lumenal, vesicle portion of the chain corresponds to tyrosine 219 to tryptophan 225. The chain crosses the membrane as a helical span at residues valine 226–valine 246. Residues threonine 247 to methionine 267 are Cytoplasmic-facing. Residues isoleucine 268–phenylalanine 288 form a helical membrane-spanning segment. The Lumenal, vesicle segment spans residues leucine 289 to tryptophan 306. A glycan (N-linked (GlcNAc...) asparagine) is linked at asparagine 302. Residues glutamine 307–valine 327 traverse the membrane as a helical segment. The Cytoplasmic portion of the chain corresponds to lysine 328 to glutamine 337. Residues tryptophan 338–cysteine 358 traverse the membrane as a helical segment. Topologically, residues arginine 359–glutamate 363 are lumenal, vesicle. Residues leucine 364–proline 384 form a helical membrane-spanning segment. Topologically, residues threonine 385–serine 400 are cytoplasmic. The chain crosses the membrane as a helical span at residues valine 401–glycine 421. Topologically, residues glutamine 422 to glycine 428 are lumenal, vesicle. The helical transmembrane segment at phenylalanine 429–phenylalanine 449 threads the bilayer. The Cytoplasmic portion of the chain corresponds to leucine 450–glutamate 511. The disordered stretch occupies residues glutamate 485–glutamate 511.

The protein belongs to the major facilitator superfamily. Vesicular transporter family. High expression in the electric lobe of the brain.

It localises to the membrane. Its function is as follows. Involved in acetylcholine transport into synaptic vesicles. This chain is Vesicular acetylcholine transporter, found in Torpedo marmorata (Marbled electric ray).